A 194-amino-acid chain; its full sequence is Large ribosomal subunit protein bL9c (194 aa).

A chloroplast-targeting transit peptide spans 1–39 (MASSTLSSLSSTPLQHSFAANLKTCSQFPNKSSGFMVFA).

It belongs to the bacterial ribosomal protein bL9 family. In terms of assembly, part of the 50S ribosomal subunit.

Its subcellular location is the plastid. It localises to the chloroplast. In terms of biological role, binds to the 23S rRNA. The polypeptide is Large ribosomal subunit protein bL9c (RPL9) (Pisum sativum (Garden pea)).